Here is a 905-residue protein sequence, read N- to C-terminus: Methionine--tRNA ligase, cytoplasmic (905 aa).

In terms of domain architecture, GST N-terminal spans Met-1 to Met-75. The 128-residue stretch at Gly-72–Phe-199 folds into the GST C-terminal domain. Residues Pro-271 to Asn-281 carry the 'HIGH' region motif. Residues Lys-591–Ser-595 carry the 'KMSKS' region motif. Lys-594 contributes to the ATP binding site. 2 disordered regions span residues Arg-813 to Pro-874 and Leu-886 to Lys-905. Positions Gly-841–Pro-874 are enriched in basic and acidic residues. The WHEP-TRS domain occupies Arg-844–Lys-900.

Belongs to the class-I aminoacyl-tRNA synthetase family. As to quaternary structure, monomer. Part of a multisubunit complex that groups tRNA ligases for Arg (RARS1), Asp (DARS1), Gln (QARS1), Ile (IARS1), Leu (LARS1), Lys (KARS1), Met (MARS1) the bifunctional ligase for Glu and Pro (EPRS1) and the auxiliary subunits AIMP1/p43, AIMP2/p38 and EEF1E1/p18.

It is found in the cytoplasm. The protein localises to the cytosol. Its subcellular location is the nucleus. It localises to the nucleolus. It catalyses the reaction tRNA(Met) + L-methionine + ATP = L-methionyl-tRNA(Met) + AMP + diphosphate. In terms of biological role, catalyzes the specific attachment of an amino acid to its cognate tRNA in a 2 step reaction: the amino acid (AA) is first activated by ATP to form AA-AMP and then transferred to the acceptor end of the tRNA. Plays a role in the synthesis of ribosomal RNA in the nucleolus. This is Methionine--tRNA ligase, cytoplasmic (mars1) from Xenopus laevis (African clawed frog).